The chain runs to 149 residues: D-aminoacyl-tRNA deacylase (149 aa).

Positions Gly137–Pro138 match the Gly-cisPro motif, important for rejection of L-amino acids motif.

Belongs to the DTD family. In terms of assembly, homodimer.

It is found in the cytoplasm. The catalysed reaction is glycyl-tRNA(Ala) + H2O = tRNA(Ala) + glycine + H(+). The enzyme catalyses a D-aminoacyl-tRNA + H2O = a tRNA + a D-alpha-amino acid + H(+). In terms of biological role, an aminoacyl-tRNA editing enzyme that deacylates mischarged D-aminoacyl-tRNAs. Also deacylates mischarged glycyl-tRNA(Ala), protecting cells against glycine mischarging by AlaRS. Acts via tRNA-based rather than protein-based catalysis; rejects L-amino acids rather than detecting D-amino acids in the active site. By recycling D-aminoacyl-tRNA to D-amino acids and free tRNA molecules, this enzyme counteracts the toxicity associated with the formation of D-aminoacyl-tRNA entities in vivo and helps enforce protein L-homochirality. In Alkaliphilus metalliredigens (strain QYMF), this protein is D-aminoacyl-tRNA deacylase.